A 350-amino-acid polypeptide reads, in one-letter code: Mitochondrial glycine transporter (350 aa).

Solcar repeat units lie at residues 23 to 107 (SKPK…LRQC), 134 to 218 (LSHT…SKKN), and 250 to 334 (SSIS…LILK). 6 helical membrane-spanning segments follow: residues 29–54 (FIAGLASGLSSAILLQPADLLKTRIQ), 82–108 (GTLPSALRTGFGSALYFSSLNALRQCI), 140–165 (LLTGAMARTAAGFIMMPVTVIKVRYE), 193–216 (GFGATAIRDAPYAGLYVVFYEQSK), 254–280 (VNFVSGALAAGLATSITNPFDVVKTRL), and 309–327 (GLGLRMGRKAISSALAWTV).

The protein belongs to the mitochondrial carrier (TC 2.A.29) family. SLC25A38 subfamily.

The protein resides in the mitochondrion inner membrane. The catalysed reaction is glycine(in) = glycine(out). In terms of biological role, mitochondrial glycine transporter that imports glycine into the mitochondrial matrix. Plays an important role in providing glycine for the first enzymatic step in heme biosynthesis, the condensation of glycine with succinyl-CoA to produce 5-aminolevulinate (ALA) in the mitochondrial matrix. This chain is Mitochondrial glycine transporter, found in Ajellomyces capsulatus (strain NAm1 / WU24) (Darling's disease fungus).